The sequence spans 148 residues: Large ribosomal subunit protein bL9 (148 aa).

The protein belongs to the bacterial ribosomal protein bL9 family.

Binds to the 23S rRNA. The polypeptide is Large ribosomal subunit protein bL9 (Staphylococcus haemolyticus (strain JCSC1435)).